We begin with the raw amino-acid sequence, 308 residues long: N-acetylmuramic acid 6-phosphate etherase (308 aa).

Residues 59–222 (TAERLRHGGR…STGVMVKLGK (164 aa)) enclose the SIS domain. The active-site Proton donor is Glu87. Glu118 is a catalytic residue.

This sequence belongs to the GCKR-like family. MurNAc-6-P etherase subfamily. In terms of assembly, homodimer.

The enzyme catalyses N-acetyl-D-muramate 6-phosphate + H2O = N-acetyl-D-glucosamine 6-phosphate + (R)-lactate. Its pathway is amino-sugar metabolism; N-acetylmuramate degradation. In terms of biological role, specifically catalyzes the cleavage of the D-lactyl ether substituent of MurNAc 6-phosphate, producing GlcNAc 6-phosphate and D-lactate. This chain is N-acetylmuramic acid 6-phosphate etherase, found in Nostoc punctiforme (strain ATCC 29133 / PCC 73102).